The chain runs to 441 residues: AP-2 complex subunit mu (441 aa).

The region spanning 174–440 (RNELFLDVIE…IGRSGLYETR (267 aa)) is the MHD domain.

Belongs to the adapter complexes medium subunit family. Adapter protein complex 2 (AP-2) is a heterotetramer composed of two large adaptins (alpha-type subunit and beta-type subunits), a medium adaptin (mu-type subunit AP50) and a small adaptin (sigma-type subunit AP17). In terms of tissue distribution, brain, heart, lung, liver, testis and spleen.

The protein localises to the cell membrane. It localises to the membrane. It is found in the coated pit. Its function is as follows. Component of the adapter complexes which link clathrin to receptors in coated vesicles. Clathrin-associated protein complexes are believed to interact with the cytoplasmic tails of membrane proteins, leading to their selection and concentration. AP50 is a subunit of the plasma membrane adapter. Essential wnt/egl-20 signaling protein that functions in wnt/egl-20-producing cells. Required for the AP-2 complex-mediated endocytosis of membrane proteins including wntless homolog mig-14 in egl-20-producing cells. During development, regulates the migration of HSN neurons and the left and right Q neuroblasts (QL and QR, respectively) and their descendants, possibly through hox gene and wnt/egl-20 gene target mab-5, and plays a role in establishing ALM and PLM neuronal cell polarity. Regulates AWB sensory neuron cilia membrane expansion during development, potentially via localization of tub-1 and PtdIns(4,5)P2 to the ciliary base. Required for the asymmetric divisions of V5 cells. This Caenorhabditis elegans protein is AP-2 complex subunit mu (dpy-23).